A 364-amino-acid polypeptide reads, in one-letter code: C2 calcium-dependent domain-containing protein 4A (364 aa).

Disordered stretches follow at residues 118-175 and 192-242; these read GSPS…PPRC and AGRS…RPER. Residues 220–233 are compositionally biased toward polar residues; that stretch reads SPGSPTQAPVTSLS. In terms of domain architecture, C2 spans 254–364; it reads AGGALRLAAE…ELLLGPLLLL (111 aa).

Belongs to the C2CD4 family.

It localises to the nucleus. May be involved in inflammatory process. May regulate cell architecture and adhesion. The chain is C2 calcium-dependent domain-containing protein 4A (C2CD4A) from Bos taurus (Bovine).